Consider the following 92-residue polypeptide: Small ribosomal subunit protein uS19 (92 aa).

Belongs to the universal ribosomal protein uS19 family.

In terms of biological role, protein S19 forms a complex with S13 that binds strongly to the 16S ribosomal RNA. The sequence is that of Small ribosomal subunit protein uS19 from Streptococcus agalactiae serotype Ia (strain ATCC 27591 / A909 / CDC SS700).